The chain runs to 424 residues: NADH-quinone oxidoreductase subunit H (424 aa).

A run of 9 helical transmembrane segments spans residues 11-31 (LVVA…LVAI), 79-99 (FVYF…FAFI), 119-139 (LPVA…GIVL), 160-180 (VISY…YAGS), 193-213 (VWYI…MVGE), 255-275 (VSAL…PLNL), 283-303 (WWPV…YFWL), 317-337 (ALGW…AAVI), and 347-367 (YWTP…VMSL). The segment at 376–424 (AVTKARRRGKQPAAGPDEQGALEPLFPTPPLPMKPLAQPVGASKENARG) is disordered.

The protein belongs to the complex I subunit 1 family. NDH-1 is composed of 14 different subunits. Subunits NuoA, H, J, K, L, M, N constitute the membrane sector of the complex.

Its subcellular location is the cell membrane. The enzyme catalyses a quinone + NADH + 5 H(+)(in) = a quinol + NAD(+) + 4 H(+)(out). NDH-1 shuttles electrons from NADH, via FMN and iron-sulfur (Fe-S) centers, to quinones in the respiratory chain. The immediate electron acceptor for the enzyme in this species is believed to be menaquinone. Couples the redox reaction to proton translocation (for every two electrons transferred, four hydrogen ions are translocated across the cytoplasmic membrane), and thus conserves the redox energy in a proton gradient. This subunit may bind ubiquinone. The polypeptide is NADH-quinone oxidoreductase subunit H (Mycobacterium ulcerans (strain Agy99)).